Here is a 548-residue protein sequence, read N- to C-terminus: Chaperonin GroEL (548 aa).

ATP-binding positions include 30 to 33, Lys51, 87 to 91, Gly415, 479 to 481, and Asp495; these read TLGP, DGTTT, and NAA. A disordered region spans residues 524–548; sequence LPKEDKSSDSSSSPAGGMGGMGGMM. Residues 539 to 548 show a composition bias toward gly residues; the sequence is GGMGGMGGMM.

This sequence belongs to the chaperonin (HSP60) family. As to quaternary structure, forms a cylinder of 14 subunits composed of two heptameric rings stacked back-to-back. Interacts with the co-chaperonin GroES.

It is found in the cytoplasm. It catalyses the reaction ATP + H2O + a folded polypeptide = ADP + phosphate + an unfolded polypeptide.. In terms of biological role, together with its co-chaperonin GroES, plays an essential role in assisting protein folding. The GroEL-GroES system forms a nano-cage that allows encapsulation of the non-native substrate proteins and provides a physical environment optimized to promote and accelerate protein folding. This chain is Chaperonin GroEL, found in Buchnera aphidicola subsp. Acyrthosiphon pisum (strain Tuc7).